Reading from the N-terminus, the 92-residue chain is Small ribosomal subunit protein uS19 (92 aa).

Belongs to the universal ribosomal protein uS19 family.

Its function is as follows. Protein S19 forms a complex with S13 that binds strongly to the 16S ribosomal RNA. The chain is Small ribosomal subunit protein uS19 from Corynebacterium jeikeium (strain K411).